We begin with the raw amino-acid sequence, 212 residues long: Transcription antitermination protein NusB (212 aa).

Belongs to the NusB family.

Involved in transcription antitermination. Required for transcription of ribosomal RNA (rRNA) genes. Binds specifically to the boxA antiterminator sequence of the ribosomal RNA (rrn) operons. This Gloeothece citriformis (strain PCC 7424) (Cyanothece sp. (strain PCC 7424)) protein is Transcription antitermination protein NusB.